A 100-amino-acid polypeptide reads, in one-letter code: Large ribosomal subunit protein bL21 (100 aa).

This sequence belongs to the bacterial ribosomal protein bL21 family. Part of the 50S ribosomal subunit. Contacts protein L20.

Functionally, this protein binds to 23S rRNA in the presence of protein L20. The polypeptide is Large ribosomal subunit protein bL21 (Deinococcus deserti (strain DSM 17065 / CIP 109153 / LMG 22923 / VCD115)).